Reading from the N-terminus, the 408-residue chain is Argininosuccinate synthase (408 aa).

ATP-binding positions include 10-18 (AYSGGLDTS) and alanine 37. L-citrulline-binding residues include tyrosine 90 and serine 95. Glycine 120 contacts ATP. 3 residues coordinate L-aspartate: threonine 122, asparagine 126, and aspartate 127. L-citrulline is bound at residue asparagine 126. L-citrulline is bound by residues arginine 130, serine 181, serine 190, glutamate 266, and tyrosine 278.

Belongs to the argininosuccinate synthase family. Type 1 subfamily. As to quaternary structure, homotetramer.

Its subcellular location is the cytoplasm. It carries out the reaction L-citrulline + L-aspartate + ATP = 2-(N(omega)-L-arginino)succinate + AMP + diphosphate + H(+). The protein operates within amino-acid biosynthesis; L-arginine biosynthesis; L-arginine from L-ornithine and carbamoyl phosphate: step 2/3. The sequence is that of Argininosuccinate synthase from Chromobacterium violaceum (strain ATCC 12472 / DSM 30191 / JCM 1249 / CCUG 213 / NBRC 12614 / NCIMB 9131 / NCTC 9757 / MK).